The following is a 365-amino-acid chain: MGSISSTPSQKSPVFPARSLLPSDIVAVRPEGDEAKVLKFPDLVKSIPFPLRLNPYIRFVSAESDAFIIEYANFSEKQRNRFIGLNAGLLCGMCYAECGPEQLRVCCDFMSFLFNLDDWSDEFDTAGTKGLEEAVMNTLYHPDTYVSDTVAARTARSWWTRMLKTVGPRCRQRFVETLGFYFKAILQQAADRSSKTIPDLETYISLRRDTSGCKTGFALIEYAAGIDLPNEVVDHPIIQSLLDATNDCVSWANDILSYNREQSRGDTHNLVPVIMQTVGIDRQAAIDYAGDLCNKSVAHFLEGKAALPSWGKEVDVQVEQYVQGLEDWIIANAEWSFMTERYFGKDGPKIRKGLQVSLLPVVGFD.

The Mg(2+) site is built by aspartate 117, asparagine 253, serine 257, and glutamate 261. Positions aspartate 117 to aspartate 121 match the DDXXD motif motif. An NSE/DTE motif motif is present at residues asparagine 253 to glutamate 261. The (2E,6E)-farnesyl diphosphate site is built by arginine 341 and tyrosine 342.

Belongs to the terpene synthase family. It depends on Mg(2+) as a cofactor.

It carries out the reaction (2E,6E)-farnesyl diphosphate = delta-cadinene + diphosphate. Functionally, terpene cyclase that catalyzes the cyclization of farnesyl diphosphate (FPP) to various sesquiterpenes, including beta-elemene gamma-cadinene, delta-cadinene, and alpha-cadinene. The polypeptide is Sesquiterpene synthase 3 (Postia placenta (strain ATCC 44394 / Madison 698-R) (Brown rot fungus)).